Here is a 223-residue protein sequence, read N- to C-terminus: Enolase-phosphatase E1 (223 aa).

This sequence belongs to the HAD-like hydrolase superfamily. MasA/MtnC family. As to quaternary structure, monomer. The cofactor is Mg(2+).

The catalysed reaction is 5-methylsulfanyl-2,3-dioxopentyl phosphate + H2O = 1,2-dihydroxy-5-(methylsulfanyl)pent-1-en-3-one + phosphate. It functions in the pathway amino-acid biosynthesis; L-methionine biosynthesis via salvage pathway; L-methionine from S-methyl-5-thio-alpha-D-ribose 1-phosphate: step 3/6. It participates in amino-acid biosynthesis; L-methionine biosynthesis via salvage pathway; L-methionine from S-methyl-5-thio-alpha-D-ribose 1-phosphate: step 4/6. Functionally, bifunctional enzyme that catalyzes the enolization of 2,3-diketo-5-methylthiopentyl-1-phosphate (DK-MTP-1-P) into the intermediate 2-hydroxy-3-keto-5-methylthiopentenyl-1-phosphate (HK-MTPenyl-1-P), which is then dephosphorylated to form the acireductone 1,2-dihydroxy-3-keto-5-methylthiopentene (DHK-MTPene). The chain is Enolase-phosphatase E1 from Aquifex aeolicus (strain VF5).